A 157-amino-acid chain; its full sequence is Lipoprotein signal peptidase (157 aa).

4 consecutive transmembrane segments (helical) span residues 10-30 (LVFI…KHAI), 36-56 (YESL…FSLL), 58-78 (FLEG…FIFL), and 84-104 (LFKN…SNVL). Active-site residues include aspartate 114 and aspartate 131. Residues 122-142 (FDFAIFNFADVMIDVGVGVLL) form a helical membrane-spanning segment.

The protein belongs to the peptidase A8 family.

Its subcellular location is the cell inner membrane. The catalysed reaction is Release of signal peptides from bacterial membrane prolipoproteins. Hydrolyzes -Xaa-Yaa-Zaa-|-(S,diacylglyceryl)Cys-, in which Xaa is hydrophobic (preferably Leu), and Yaa (Ala or Ser) and Zaa (Gly or Ala) have small, neutral side chains.. The protein operates within protein modification; lipoprotein biosynthesis (signal peptide cleavage). In terms of biological role, this protein specifically catalyzes the removal of signal peptides from prolipoproteins. This chain is Lipoprotein signal peptidase, found in Helicobacter pylori (strain P12).